The chain runs to 73 residues: Salivary protein FS48 (73 aa).

Residues 1 to 21 (MKFAFAIFVVLAILHTELISA) form the signal peptide.

It localises to the secreted. Functionally, salivary protein that inhibits host voltage-gated potassium channels Kv1.1/KCNA1, Kv1.2/KCNA2 and Kv1.3/KCNA3 likely via a voltage-independent pore-blocking mechanism. Suppresses expression of the Kv1.3/KCNA3 channel in lipopolysaccharide (LPS)-stimulated mouse macrophages and human T-cells. Down-regulates secretion of nitric oxide (NO) and inflammatory cytokines, such as TNF-alpha/TNF, IL-1beta/IL1B and IL6, in LPS-stimulated mouse macrophages in a manner dependent on Kv1.3/KCNA3 channel blockage. Reduces activation of MAPK and NF-kappa-B signaling pathways in LPS-stimulated mouse macrophages. Modulates intracellular Ca(2+) signaling in human PMA/ionomycin-triggered T-cells. Interferes with the activation of the MAPK, NF-kappa-B and NFATc1 pathways in human PMA/ionomycin-triggered T-cells. Reduces proliferation of human PMA/ionomycin-triggered T-cells. Down-regulates secretion of cytokines, such as TNF-alpha/TNF and IL2, in human PMA/ionomycin-triggered T-cells. The chain is Salivary protein FS48 from Xenopsylla cheopis (Oriental rat flea).